Consider the following 215-residue polypeptide: Probable GTP-binding protein EngB (215 aa).

An EngB-type G domain is found at Glu26 to Pro200. GTP contacts are provided by residues Gly34–Ser41, Gly61–Leu65, Asp79–Gly82, Thr146–Asp149, and Phe179–Ser181. Positions 41 and 63 each coordinate Mg(2+).

This sequence belongs to the TRAFAC class TrmE-Era-EngA-EngB-Septin-like GTPase superfamily. EngB GTPase family. The cofactor is Mg(2+).

Its function is as follows. Necessary for normal cell division and for the maintenance of normal septation. This Aliivibrio fischeri (strain MJ11) (Vibrio fischeri) protein is Probable GTP-binding protein EngB.